A 78-amino-acid chain; its full sequence is MDELFLRMRALVAEKLEVEEASITLDSSFRGDLGADSLDTYELVYAIEEEMGITIPDEKANEFETVRDAYEFIKSKVT.

A Carrier domain is found at 2 to 77 (DELFLRMRAL…DAYEFIKSKV (76 aa)). Ser37 is modified (O-(pantetheine 4'-phosphoryl)serine).

The protein belongs to the acyl carrier protein (ACP) family. 4'-phosphopantetheine is transferred from CoA to a specific serine of apo-ACP by AcpS. This modification is essential for activity because fatty acids are bound in thioester linkage to the sulfhydryl of the prosthetic group.

The protein localises to the cytoplasm. It participates in lipid metabolism; fatty acid biosynthesis. Its function is as follows. Carrier of the growing fatty acid chain in fatty acid biosynthesis. The chain is Acyl carrier protein from Treponema pallidum (strain Nichols).